Here is a 289-residue protein sequence, read N- to C-terminus: Zinc finger matrin-type protein 3 (289 aa).

Positions 1-42 (MILLQHAVLPPPKQPSPSPPMSVATRSTGTLQLPPQKPFGQE) are disordered. The span at 9-20 (LPPPKQPSPSPP) shows a compositional bias: pro residues. Polar residues predominate over residues 24 to 33 (ATRSTGTLQL). Matrin-type zinc fingers lie at residues 70 to 100 (LYCK…KLRN) and 147 to 177 (DYCK…RLRL). Polar residues predominate over residues 180–191 (AQSNSFSESSEL). The disordered stretch occupies residues 180–201 (AQSNSFSESSELGQRRARKEGN). The Matrin-type 3 zinc-finger motif lies at 246 to 276 (FYCSMCNVGAGEEMEFRQHLESKQHKSKVSE).

As to quaternary structure, interacts with dsRNA. Highly expressed in adult brain, and moderately in adult kidney and testis. Not detected in fetal brain, heart, pancreas, adrenal gland, liver or small intestine.

It localises to the nucleus. The protein localises to the nucleolus. Acts as a bona fide target gene of p53/TP53. May play a role in the TP53-dependent growth regulatory pathway. May contribute to TP53-mediated apoptosis by regulation of TP53 expression and translocation to the nucleus and nucleolus. This is Zinc finger matrin-type protein 3 from Homo sapiens (Human).